The primary structure comprises 162 residues: TNIPQTMQDLDLQEVAGKWHSVAMAASDISLLDSEEAPLRVYIEKLRPTPEDNLEIILREGENKGCAEKKIFAEKTESPAEFKINYLDEDTVFALDSDYKNYLFLCMKNAATPGQSLVCQYLARTQMVDEEIMEKFRRALQPLPGRVQIVPDLTRMAERCRI.

2 disulfides stabilise this stretch: Cys-66–Cys-160 and Cys-106–Cys-119.

Belongs to the calycin superfamily. Lipocalin family. As to quaternary structure, monomer. In terms of tissue distribution, synthesized in mammary gland and secreted in milk.

It localises to the secreted. Primary component of whey, it binds retinol and is probably involved in the transport of that molecule. The polypeptide is Beta-lactoglobulin-1 (LGB1) (Equus asinus (Donkey)).